The following is a 604-amino-acid chain: Glutamine--fructose-6-phosphate aminotransferase [isomerizing] (604 aa).

Residue Cys-2 is the Nucleophile; for GATase activity of the active site. The Glutamine amidotransferase type-2 domain maps to 2–218 (CGIVGVVGNT…DKELVIVKKD (217 aa)). 2 SIS domains span residues 284–423 (IIKS…ANGK) and 456–594 (VEQL…VDKP). Lys-599 serves as the catalytic For Fru-6P isomerization activity.

As to quaternary structure, homodimer.

It localises to the cytoplasm. The enzyme catalyses D-fructose 6-phosphate + L-glutamine = D-glucosamine 6-phosphate + L-glutamate. Its function is as follows. Catalyzes the first step in hexosamine metabolism, converting fructose-6P into glucosamine-6P using glutamine as a nitrogen source. This chain is Glutamine--fructose-6-phosphate aminotransferase [isomerizing], found in Streptococcus agalactiae serotype V (strain ATCC BAA-611 / 2603 V/R).